Consider the following 462-residue polypeptide: Glutamate--tRNA ligase (462 aa).

Residues 11–21 carry the 'HIGH' region motif; that stretch reads PSPTGFIHLGN. The 'KMSKS' region signature appears at 243–247; the sequence is KMSKR. Position 246 (Lys246) interacts with ATP.

This sequence belongs to the class-I aminoacyl-tRNA synthetase family. Glutamate--tRNA ligase type 1 subfamily. Monomer.

It is found in the cytoplasm. The catalysed reaction is tRNA(Glu) + L-glutamate + ATP = L-glutamyl-tRNA(Glu) + AMP + diphosphate. Its function is as follows. Catalyzes the attachment of glutamate to tRNA(Glu) in a two-step reaction: glutamate is first activated by ATP to form Glu-AMP and then transferred to the acceptor end of tRNA(Glu). The chain is Glutamate--tRNA ligase from Albidiferax ferrireducens (strain ATCC BAA-621 / DSM 15236 / T118) (Rhodoferax ferrireducens).